The following is a 121-amino-acid chain: MSAVAENIQTEMPAPFVFTDSAASKVAELIAEEGNPDLKLRVFVQGGGCSGFQYGFTFDEITNEDDTTMTKNGVSLLIDAMSYQYLVGAEIDYKDDLEGAQFVIKNPNASSSCGCGSSFSV.

The iron-sulfur cluster site is built by Cys-49, Cys-113, and Cys-115.

It belongs to the HesB/IscA family. Homodimer. Requires iron-sulfur cluster as cofactor.

Its function is as follows. Required for insertion of 4Fe-4S clusters. The polypeptide is Putative iron-sulfur cluster insertion protein ErpA 1 (Polaromonas naphthalenivorans (strain CJ2)).